Reading from the N-terminus, the 84-residue chain is Large ribosomal subunit protein bL27 (84 aa).

The interval 1–22 (MAHKKAGGSTRNGRDSESKRLG) is disordered.

It belongs to the bacterial ribosomal protein bL27 family.

The chain is Large ribosomal subunit protein bL27 from Shewanella loihica (strain ATCC BAA-1088 / PV-4).